A 588-amino-acid polypeptide reads, in one-letter code: Aspartate--tRNA ligase (588 aa).

Residue Glu177 coordinates L-aspartate. Residues 201 to 204 (QLFK) are aspartate. An L-aspartate-binding site is contributed by Arg223. ATP is bound by residues 223-225 (RDE) and Gln232. His451 contacts L-aspartate. Glu485 contacts ATP. Arg492 contacts L-aspartate. Residue 537 to 540 (GLDR) coordinates ATP.

The protein belongs to the class-II aminoacyl-tRNA synthetase family. Type 1 subfamily. As to quaternary structure, homodimer.

The protein resides in the cytoplasm. It catalyses the reaction tRNA(Asp) + L-aspartate + ATP = L-aspartyl-tRNA(Asp) + AMP + diphosphate. Functionally, catalyzes the attachment of L-aspartate to tRNA(Asp) in a two-step reaction: L-aspartate is first activated by ATP to form Asp-AMP and then transferred to the acceptor end of tRNA(Asp). This is Aspartate--tRNA ligase from Staphylococcus aureus (strain Newman).